The chain runs to 74 residues: Tau-AnmTx Ueq 12-1 (74 aa).

An N-terminal signal peptide occupies residues 1–18 (MCLLMLVLGAMYVQGWHS). The propeptide at 19–27 (AGFGKRTLK) is removed in mature form. 5 disulfides stabilise this stretch: Cys30/Cys37, Cys40/Cys71, Cys46/Cys64, Cys51/Cys72, and Cys58/Cys73.

Belongs to the Cnidaria small cysteine-rich protein (SCRiP) family. Detected in mucus secreted from ectoderm.

The protein localises to the secreted. Functionally, potentiates activation of mammalian TRPA1, a non-selective cation channel involved in perception of pain, in vitro yet has an analgesic and anti-inflammatory effect in vivo. Has antibacterial activity against C.glutamicum (MIC=50 uM) and, to a lesser extent, against S.aureus but not against P.aeruginosa or E.coli. The protein is Tau-AnmTx Ueq 12-1 of Urticina eques (Sea anemone).